A 294-amino-acid polypeptide reads, in one-letter code: Ribosomal RNA small subunit methyltransferase A (294 aa).

6 residues coordinate S-adenosyl-L-methionine: Asn-31, Leu-33, Gly-58, Glu-79, Asp-104, and Asn-129.

It belongs to the class I-like SAM-binding methyltransferase superfamily. rRNA adenine N(6)-methyltransferase family. RsmA subfamily.

It localises to the cytoplasm. The catalysed reaction is adenosine(1518)/adenosine(1519) in 16S rRNA + 4 S-adenosyl-L-methionine = N(6)-dimethyladenosine(1518)/N(6)-dimethyladenosine(1519) in 16S rRNA + 4 S-adenosyl-L-homocysteine + 4 H(+). Its function is as follows. Specifically dimethylates two adjacent adenosines (A1518 and A1519) in the loop of a conserved hairpin near the 3'-end of 16S rRNA in the 30S particle. May play a critical role in biogenesis of 30S subunits. The protein is Ribosomal RNA small subunit methyltransferase A of Oceanobacillus iheyensis (strain DSM 14371 / CIP 107618 / JCM 11309 / KCTC 3954 / HTE831).